Here is a 177-residue protein sequence, read N- to C-terminus: MSRIAKAPITVPSGVEVVVNGQNVAVKGNKGELVCLLNDAVVIKLEEGVIRFAPAEGFKDGWAQAGTARANVNNMVLGVTEGFKKTLLLQGVGYRAQVAGTIVNLTLGFSHPVAYQLPEGITAVAKSQTEIILEGADKQVVGQAAAKIRAFRPPEPYKGKGVRYANEIVRRKEAKKK.

Belongs to the universal ribosomal protein uL6 family. Part of the 50S ribosomal subunit.

Its function is as follows. This protein binds to the 23S rRNA, and is important in its secondary structure. It is located near the subunit interface in the base of the L7/L12 stalk, and near the tRNA binding site of the peptidyltransferase center. This chain is Large ribosomal subunit protein uL6, found in Psychromonas ingrahamii (strain DSM 17664 / CCUG 51855 / 37).